A 130-amino-acid chain; its full sequence is S-adenosylmethionine decarboxylase proenzyme (130 aa).

The Schiff-base intermediate with substrate; via pyruvic acid role is filled by Ser66. A Pyruvic acid (Ser); by autocatalysis modification is found at Ser66. The active-site Proton acceptor; for processing activity is His71. Catalysis depends on Cys86, which acts as the Proton donor; for catalytic activity.

It belongs to the prokaryotic AdoMetDC family. Type 1 subfamily. Heterotetramer of two alpha and two beta chains arranged as a dimer of alpha/beta heterodimers. Requires pyruvate as cofactor. Post-translationally, is synthesized initially as an inactive proenzyme. Formation of the active enzyme involves a self-maturation process in which the active site pyruvoyl group is generated from an internal serine residue via an autocatalytic post-translational modification. Two non-identical subunits are generated from the proenzyme in this reaction, and the pyruvate is formed at the N-terminus of the alpha chain, which is derived from the carboxyl end of the proenzyme. The post-translation cleavage follows an unusual pathway, termed non-hydrolytic serinolysis, in which the side chain hydroxyl group of the serine supplies its oxygen atom to form the C-terminus of the beta chain, while the remainder of the serine residue undergoes an oxidative deamination to produce ammonia and the pyruvoyl group blocking the N-terminus of the alpha chain.

The catalysed reaction is S-adenosyl-L-methionine + H(+) = S-adenosyl 3-(methylsulfanyl)propylamine + CO2. Its pathway is amine and polyamine biosynthesis; S-adenosylmethioninamine biosynthesis; S-adenosylmethioninamine from S-adenosyl-L-methionine: step 1/1. Catalyzes the decarboxylation of S-adenosylmethionine to S-adenosylmethioninamine (dcAdoMet), the propylamine donor required for the synthesis of the polyamines spermine and spermidine from the diamine putrescine. The chain is S-adenosylmethionine decarboxylase proenzyme from Bacillus cytotoxicus (strain DSM 22905 / CIP 110041 / 391-98 / NVH 391-98).